We begin with the raw amino-acid sequence, 294 residues long: 4-hydroxy-tetrahydrodipicolinate synthase (294 aa).

Thr45 is a pyruvate binding site. The active-site Proton donor/acceptor is the Tyr133. The active-site Schiff-base intermediate with substrate is Lys161. Ile203 lines the pyruvate pocket.

The protein belongs to the DapA family. Homotetramer; dimer of dimers.

The protein localises to the cytoplasm. It catalyses the reaction L-aspartate 4-semialdehyde + pyruvate = (2S,4S)-4-hydroxy-2,3,4,5-tetrahydrodipicolinate + H2O + H(+). It functions in the pathway amino-acid biosynthesis; L-lysine biosynthesis via DAP pathway; (S)-tetrahydrodipicolinate from L-aspartate: step 3/4. In terms of biological role, catalyzes the condensation of (S)-aspartate-beta-semialdehyde [(S)-ASA] and pyruvate to 4-hydroxy-tetrahydrodipicolinate (HTPA). In Shewanella pealeana (strain ATCC 700345 / ANG-SQ1), this protein is 4-hydroxy-tetrahydrodipicolinate synthase.